The sequence spans 781 residues: Putative UPF0313 protein YPO0674/y3502/YP_2990 (781 aa).

Residues 368–646 (AYDMIRFSIN…KALLRYHDPA (279 aa)) enclose the Radical SAM core domain. The [4Fe-4S] cluster site is built by C382, C386, and C389. Residues 681–781 (REARRALRHH…AGSRGKNRQH (101 aa)) are disordered. Over residues 696-708 (KHTSITRQRQPSN) the composition is skewed to polar residues. Low complexity predominate over residues 726 to 750 (TSSAHSTSANQSTSANQSTSAAHST).

This sequence belongs to the UPF0313 family. The cofactor is [4Fe-4S] cluster.

This Yersinia pestis protein is Putative UPF0313 protein YPO0674/y3502/YP_2990.